Consider the following 522-residue polypeptide: Involucrin (522 aa).

Residues 1 to 15 are compositionally biased toward polar residues; sequence MSQQHTLPVTLSPAL. 3 disordered regions span residues 1–126, 159–329, and 366–496; these read MSQQ…LEEE, QEGQ…LVQQ, and QEGQ…QPVL. A compositionally biased stretch (low complexity) spans 76–91; that stretch reads EQQQQEPQEQELQQQH. A compositionally biased stretch (basic and acidic residues) spans 92 to 126; that stretch reads WEQHEEHQKAENPEQQLKQEKAQRDQQLNEHLEEE. Residues 169 to 181 show a composition bias toward low complexity; sequence QEGQLELPEQQEG. Basic and acidic residues-rich tracts occupy residues 182-198, 214-231, 252-264, 274-290, and 305-323; these read QLEH…HLDQ, KHLE…HQKG, QLKH…KQPE, KHLE…EHQE, and QLEE…EGQL. Positions 375 to 389 are enriched in low complexity; that stretch reads QQQGQLEVSEQQVGQ. 3 stretches are compositionally biased toward basic and acidic residues: residues 391–401, 409–418, and 431–465; these read KHLEQEGKQLE, QLKHLEKQEA, and KHPE…DLEQ. The span at 466–479 shows a compositional bias: low complexity; it reads QKGQLEQQQGQLEQ.

It belongs to the involucrin family. As to quaternary structure, directly or indirectly cross-linked to cornifelin (CNFN). Post-translationally, substrate of transglutaminase. Specific glutamines or lysines are cross-linked to keratins, desmoplakin and to inter involucrin molecules. Keratinocytes of epidermis and other stratified squamous epithelia.

It localises to the cytoplasm. In terms of biological role, part of the insoluble cornified cell envelope (CE) of stratified squamous epithelia. This is Involucrin (IVL) from Hylobates lar (Lar gibbon).